Here is a 94-residue protein sequence, read N- to C-terminus: Integration host factor subunit beta (94 aa).

The protein belongs to the bacterial histone-like protein family. As to quaternary structure, heterodimer of an alpha and a beta chain.

Functionally, this protein is one of the two subunits of integration host factor, a specific DNA-binding protein that functions in genetic recombination as well as in transcriptional and translational control. In Histophilus somni (strain 129Pt) (Haemophilus somnus), this protein is Integration host factor subunit beta.